We begin with the raw amino-acid sequence, 241 residues long: GTP cyclohydrolase 1 (241 aa).

The propeptide occupies 1–11 (MEKPRGVRCTN). A disordered region spans residues 1-58 (MEKPRGVRCTNGFPERELPRPGASRPAEKSRPPEAKGAQPADAWKAGRPRSEEDNELN). Phosphoserine is present on residues S51 and S72. Zn(2+)-binding residues include C132, H135, and C203.

It belongs to the GTP cyclohydrolase I family. As to quaternary structure, toroid-shaped homodecamer, composed of two pentamers of five dimers. Interacts with AHSA1 and GCHFR/GFRP. In terms of processing, phosphorylated.

Its subcellular location is the cytoplasm. It localises to the nucleus. The catalysed reaction is GTP + H2O = 7,8-dihydroneopterin 3'-triphosphate + formate + H(+). It functions in the pathway cofactor biosynthesis; 7,8-dihydroneopterin triphosphate biosynthesis; 7,8-dihydroneopterin triphosphate from GTP: step 1/1. Its activity is regulated as follows. GTP shows a positive allosteric effect, and tetrahydrobiopterin inhibits the enzyme activity. Zinc is required for catalytic activity. Inhibited by Mg(2+). Functionally, may positively regulate nitric oxide synthesis in endothelial cells. May be involved in dopamine synthesis. May modify pain sensitivity and persistence. The sequence is that of GTP cyclohydrolase 1 (Gch1) from Rattus norvegicus (Rat).